The primary structure comprises 362 residues: MSPQNNHLQRPPAAVLYADELAKLKQNDNAPCPPGWQLSLPAARAFILGDEAQNISRKVVISPSAVERMLVTLATGRGLMLVGEPGTAKSLLSELLATAISGDAGLTIQGGASTTEDQIKYGWNYALLINHGPSTEALVPAPLYQGMRDGKIVRFEEITRTPLEVQDCLLGMLSDRVMTGPELTGEASQLYAREGFNIIATANTRDRGVNEMSAALKRRFDFETVFPIMDFAQELELVASASARLLAHSGIPHKVPDAVLELLVRTFRDLRANGEKKTSMDTLTAIMSTAEAVNVAHAVGVRAWFLANRAGEPADLVECIAGTIVKDNEEDRARLRRYFEQRVATHKEAHWQAYYQARHRLP.

This is an uncharacterized protein from Escherichia coli (strain K12).